Consider the following 398-residue polypeptide: S-adenosylmethionine synthase (398 aa).

His-16 contacts ATP. Asp-18 lines the Mg(2+) pocket. Glu-51 is a K(+) binding site. Glu-64 and Gln-108 together coordinate L-methionine. Residues 108–118 are flexible loop; that stretch reads QSADIAQGVDA. Residues 176–178, 242–243, Asp-251, 257–258, Ala-274, and Lys-278 each bind ATP; these read DSK, KF, and RK. Asp-251 provides a ligand contact to L-methionine. Lys-282 contacts L-methionine.

Belongs to the AdoMet synthase family. Homotetramer; dimer of dimers. Mg(2+) is required as a cofactor. The cofactor is K(+).

It localises to the cytoplasm. It carries out the reaction L-methionine + ATP + H2O = S-adenosyl-L-methionine + phosphate + diphosphate. It participates in amino-acid biosynthesis; S-adenosyl-L-methionine biosynthesis; S-adenosyl-L-methionine from L-methionine: step 1/1. Its function is as follows. Catalyzes the formation of S-adenosylmethionine (AdoMet) from methionine and ATP. The overall synthetic reaction is composed of two sequential steps, AdoMet formation and the subsequent tripolyphosphate hydrolysis which occurs prior to release of AdoMet from the enzyme. This Rhodopseudomonas palustris (strain BisB5) protein is S-adenosylmethionine synthase.